Here is a 482-residue protein sequence, read N- to C-terminus: 2-succinylbenzoate--CoA ligase (482 aa).

The protein belongs to the ATP-dependent AMP-binding enzyme family. MenE subfamily.

It catalyses the reaction 2-succinylbenzoate + ATP + CoA = 2-succinylbenzoyl-CoA + AMP + diphosphate. It participates in quinol/quinone metabolism; 1,4-dihydroxy-2-naphthoate biosynthesis; 1,4-dihydroxy-2-naphthoate from chorismate: step 5/7. It functions in the pathway quinol/quinone metabolism; menaquinone biosynthesis. Converts 2-succinylbenzoate (OSB) to 2-succinylbenzoyl-CoA (OSB-CoA). This Bacillus cereus (strain AH820) protein is 2-succinylbenzoate--CoA ligase.